An 874-amino-acid chain; its full sequence is Alanine--tRNA ligase (874 aa).

Zn(2+) contacts are provided by His562, His566, Cys664, and His668.

It belongs to the class-II aminoacyl-tRNA synthetase family. Zn(2+) is required as a cofactor.

The protein localises to the cytoplasm. The enzyme catalyses tRNA(Ala) + L-alanine + ATP = L-alanyl-tRNA(Ala) + AMP + diphosphate. Functionally, catalyzes the attachment of alanine to tRNA(Ala) in a two-step reaction: alanine is first activated by ATP to form Ala-AMP and then transferred to the acceptor end of tRNA(Ala). Also edits incorrectly charged Ser-tRNA(Ala) and Gly-tRNA(Ala) via its editing domain. The chain is Alanine--tRNA ligase from Neisseria meningitidis serogroup A / serotype 4A (strain DSM 15465 / Z2491).